The sequence spans 72 residues: Conotoxin LvVIA (72 aa).

The N-terminal stretch at 1–17 (VLIIAVLFLTASELVTA) is a signal peptide. A propeptide spanning residues 18–41 (DYTRDKWQYRAASLRDAMRNFRDT) is cleaved from the precursor. Disulfide bonds link Cys-44-Cys-58, Cys-51-Cys-63, and Cys-57-Cys-70.

Belongs to the conotoxin O1 superfamily. Expressed by the venom duct.

It is found in the secreted. In Conus lividus (Livid cone), this protein is Conotoxin LvVIA.